A 363-amino-acid chain; its full sequence is Isopentenyl-diphosphate delta-isomerase (363 aa).

Residue 6 to 7 coordinates substrate; it reads RK. FMN contacts are provided by residues 64 to 66, Ser94, and Asn123; that span reads AMT. Residue Gln153 coordinates substrate. Glu154 provides a ligand contact to Mg(2+). FMN-binding positions include Lys185, Ser210, Thr215, 259 to 261, and 280 to 281; these read GVR and SA.

It belongs to the IPP isomerase type 2 family. As to quaternary structure, homooctamer. Dimer of tetramers. Mg(2+) is required as a cofactor. The cofactor is FMN. It depends on NADPH as a cofactor.

The protein localises to the cytoplasm. It carries out the reaction isopentenyl diphosphate = dimethylallyl diphosphate. Functionally, involved in the biosynthesis of isoprenoids. Catalyzes the 1,3-allylic rearrangement of the homoallylic substrate isopentenyl (IPP) to its allylic isomer, dimethylallyl diphosphate (DMAPP). In Streptomyces sp. (strain CL190), this protein is Isopentenyl-diphosphate delta-isomerase.